The chain runs to 328 residues: Ribosomal protein L11 methyltransferase (328 aa).

S-adenosyl-L-methionine is bound by residues Thr-158, Gly-180, Asp-202, and Asn-246.

This sequence belongs to the methyltransferase superfamily. PrmA family.

It is found in the cytoplasm. It carries out the reaction L-lysyl-[protein] + 3 S-adenosyl-L-methionine = N(6),N(6),N(6)-trimethyl-L-lysyl-[protein] + 3 S-adenosyl-L-homocysteine + 3 H(+). Methylates ribosomal protein L11. This is Ribosomal protein L11 methyltransferase from Polynucleobacter necessarius subsp. necessarius (strain STIR1).